We begin with the raw amino-acid sequence, 509 residues long: MIMKTIKEINEKIKKGEAVVVTAEEMIKIVEEEGAKRAADYVDVVTTGTFGAMCSSGVFINFGHSDPPIKMLRIYLNNVEAYGGLAAVDAYIGAAQPNEDPDVDIDYGGAHVIEDLVRGKEVELYAEGYTTDCYPRKEVNVRITLDDVNQAIMVNPRNCYQTYAAATNSREEKIYTYMGILLPEYNNVHYSGAGQLNPLQNDYNPETKSFNTIGIGTRIFLGGGIGYVIGEGTQHNPPFGTLMVKGDLKQMNPKFIRAATMPRYGSTLYVGIGIPIPVLNEKIAERCAIRDEDIEVPIYDYGFPRRDRPLIAKTNYKVLRSGKITLNVNIDGKDVEKTVKTGSVSSYKMAREVAETLKQWILDGKFLLTERVDTLGRAENKPMKSPITLVKDILSKPPITAHSNISIMEAAKILIKHNINHLPIVDEHGKLVGIITSWDIAKALAQNKKTIEEIMTRNVITAHEDEPVDHVAIKMSKYNISGVPVVDDYRRVVGIVTSEDISRLFGGKK.

Cys133 acts as the Cysteine persulfide intermediate in catalysis. CBS domains are found at residues 394–450 (LSKP…NKKT) and 455–509 (MTRN…GGKK). 3 residues coordinate S-methyl-5'-thioadenosine: Ser395, Ile399, and His421. S-adenosyl-L-methionine contacts are provided by residues Asp439, Thr456, Ile460, and 479 to 482 (NISG). S-methyl-5'-thioadenosine is bound at residue 497–500 (TSED).

The protein belongs to the L-aspartate semialdehyde sulfurtransferase family. As to quaternary structure, homodimer. May form a complex with MJ0099.

The enzyme catalyses L-aspartate 4-semialdehyde + reduced 2[4Fe-4S]-[ferredoxin] + hydrogen sulfide + 3 H(+) = oxidized 2[4Fe-4S]-[ferredoxin] + L-homocysteine + H2O. It functions in the pathway amino-acid biosynthesis. With respect to regulation, the ligand-induced conformational reorganization of the protein could be an important regulatory mechanism. In terms of biological role, required for O-acetylhomoserine sulfhydrylase (OAHS)-independent homocysteine (Hcy) biosynthesis. Together with MJ0099, catalyzes the condensation of sulfide with aspartate semialdehyde to generate homocysteine. Likely functions through persulfide intermediate. This Methanocaldococcus jannaschii (strain ATCC 43067 / DSM 2661 / JAL-1 / JCM 10045 / NBRC 100440) (Methanococcus jannaschii) protein is L-aspartate semialdehyde sulfurtransferase.